We begin with the raw amino-acid sequence, 291 residues long: 4-hydroxy-tetrahydrodipicolinate synthase (291 aa).

Pyruvate is bound at residue Thr45. Catalysis depends on Tyr133, which acts as the Proton donor/acceptor. The active-site Schiff-base intermediate with substrate is the Lys161. Ile203 contacts pyruvate.

Belongs to the DapA family. Homotetramer; dimer of dimers.

The protein resides in the cytoplasm. It carries out the reaction L-aspartate 4-semialdehyde + pyruvate = (2S,4S)-4-hydroxy-2,3,4,5-tetrahydrodipicolinate + H2O + H(+). It participates in amino-acid biosynthesis; L-lysine biosynthesis via DAP pathway; (S)-tetrahydrodipicolinate from L-aspartate: step 3/4. Catalyzes the condensation of (S)-aspartate-beta-semialdehyde [(S)-ASA] and pyruvate to 4-hydroxy-tetrahydrodipicolinate (HTPA). The sequence is that of 4-hydroxy-tetrahydrodipicolinate synthase from Saccharophagus degradans (strain 2-40 / ATCC 43961 / DSM 17024).